The chain runs to 73 residues: Alpha-amylase inhibitor Paim-1 (73 aa).

Cystine bridges form between Cys8/Cys24 and Cys42/Cys70.

Inhibits mammalian alpha-amylases specifically but has no action on plant and microbial alpha-amylases. This is Alpha-amylase inhibitor Paim-1 from Streptomyces olivaceoviridis (Streptomyces corchorusii).